Reading from the N-terminus, the 277-residue chain is Ubiquinone biosynthesis protein COQ4, mitochondrial (277 aa).

The N-terminal 14 residues, 1-14 (MLTKRALRTTDPYR), are a transit peptide targeting the mitochondrion. Positions 157, 158, 161, and 173 each coordinate Zn(2+).

It belongs to the COQ4 family. Component of a multi-subunit COQ enzyme complex, composed of at least COQ3, COQ4, COQ5, COQ6, COQ7 and COQ9. Zn(2+) is required as a cofactor.

It localises to the mitochondrion inner membrane. It carries out the reaction a 4-hydroxy-3-methoxy-5-(all-trans-polyprenyl)benzoate + H(+) = a 2-methoxy-6-(all-trans-polyprenyl)phenol + CO2. It functions in the pathway cofactor biosynthesis; ubiquinone biosynthesis. Functionally, lyase that catalyzes the C1-decarboxylation of 4-hydroxy-3-methoxy-5-(all-trans-polyprenyl)benzoic acid into 2-methoxy-6-(all-trans-polyprenyl)phenol during ubiquinone biosynthesis. This Ajellomyces capsulatus (strain G186AR / H82 / ATCC MYA-2454 / RMSCC 2432) (Darling's disease fungus) protein is Ubiquinone biosynthesis protein COQ4, mitochondrial.